Here is a 350-residue protein sequence, read N- to C-terminus: tRNA uridine(34) hydroxylase (350 aa).

Positions 146–240 (DDPDALFIDM…YARKAREQGL (95 aa)) constitute a Rhodanese domain. The Cysteine persulfide intermediate role is filled by Cys-200.

It belongs to the TrhO family.

It catalyses the reaction uridine(34) in tRNA + AH2 + O2 = 5-hydroxyuridine(34) in tRNA + A + H2O. In terms of biological role, catalyzes oxygen-dependent 5-hydroxyuridine (ho5U) modification at position 34 in tRNAs, the first step in 5-carboxymethoxyuridine (cmo5U) biosynthesis. May be part of an alternate pathway, which is able to bypass cmo5U biogenesis in a subset of tRNAs under aerobic conditions. The sequence is that of tRNA uridine(34) hydroxylase from Escherichia coli O45:K1 (strain S88 / ExPEC).